The sequence spans 408 residues: Succinylornithine transaminase (408 aa).

The residue at position 252 (Lys-252) is an N6-(pyridoxal phosphate)lysine.

Belongs to the class-III pyridoxal-phosphate-dependent aminotransferase family. AstC subfamily. Pyridoxal 5'-phosphate serves as cofactor.

The enzyme catalyses N(2)-succinyl-L-ornithine + 2-oxoglutarate = N-succinyl-L-glutamate 5-semialdehyde + L-glutamate. It functions in the pathway amino-acid degradation; L-arginine degradation via AST pathway; L-glutamate and succinate from L-arginine: step 3/5. Catalyzes the transamination of N(2)-succinylornithine and alpha-ketoglutarate into N(2)-succinylglutamate semialdehyde and glutamate. Can also act as an acetylornithine aminotransferase. The polypeptide is Succinylornithine transaminase (Salmonella heidelberg (strain SL476)).